A 202-amino-acid polypeptide reads, in one-letter code: Syndecan-2 (202 aa).

A signal peptide spans 1 to 18 (MQRAWILLTLGLMACVSA). Residues 19-145 (ETRTELTSDK…HSDNLFKRTE (127 aa)) lie on the Extracellular side of the membrane. O-linked (Xyl...) (glycosaminoglycan) serine glycans are attached at residues S41, S55, and S57. 2 disordered regions span residues 41–63 (SGVY…DEDI) and 88–118 (ETMT…ISEA). Residues 91 to 103 (TLKTQSITPAQTE) show a composition bias toward polar residues. Positions 104-117 (SPEETDKEEVDISE) are enriched in acidic residues. S116 carries the post-translational modification Phosphoserine. The chain crosses the membrane as a helical span at residues 146–170 (VLAAVIAGGVIGFLFAIFLILLLVY). Over 171–202 (RMRKKDEGSYDLGERKPSSAAYQKAPTKEFYA) the chain is Cytoplasmic. The disordered stretch occupies residues 179 to 202 (SYDLGERKPSSAAYQKAPTKEFYA). Residue S188 is modified to Phosphoserine.

The protein belongs to the syndecan proteoglycan family. In terms of assembly, interacts (via cytoplasmic domain) with SARM1. Forms a complex with SDCBP and PDCD6IP. In terms of processing, O-glycosylated; contains both heparan sulfate and chondroitin sulfate. Phosphorylated on serine residues. In terms of tissue distribution, preferential expression in cells of mesenchymal origin.

It localises to the membrane. In terms of biological role, cell surface proteoglycan which regulates dendritic arbor morphogenesis. The sequence is that of Syndecan-2 (Sdc2) from Mus musculus (Mouse).